The primary structure comprises 178 residues: Interleukin-10 (178 aa).

The signal sequence occupies residues 1–18 (MHSSALLCCLVFLAGVAA). Cystine bridges form between Cys30–Cys126 and Cys80–Cys132. Asn134 carries N-linked (GlcNAc...) asparagine glycosylation.

This sequence belongs to the IL-10 family. As to quaternary structure, homodimer. Interacts with IL10RA and IL10RB.

Its subcellular location is the secreted. Its function is as follows. Major immune regulatory cytokine that acts on many cells of the immune system where it has profound anti-inflammatory functions, limiting excessive tissue disruption caused by inflammation. Mechanistically, IL10 binds to its heterotetrameric receptor comprising IL10RA and IL10RB leading to JAK1 and STAT2-mediated phosphorylation of STAT3. In turn, STAT3 translocates to the nucleus where it drives expression of anti-inflammatory mediators. Targets antigen-presenting cells (APCs) such as macrophages and monocytes and inhibits their release of pro-inflammatory cytokines including granulocyte-macrophage colony-stimulating factor /GM-CSF, granulocyte colony-stimulating factor/G-CSF, IL-1 alpha, IL-1 beta, IL-6, IL-8 and TNF-alpha. Also interferes with antigen presentation by reducing the expression of MHC-class II and co-stimulatory molecules, thereby inhibiting their ability to induce T cell activation. In addition, controls the inflammatory response of macrophages by reprogramming essential metabolic pathways including mTOR signaling. This chain is Interleukin-10 (IL10), found in Bos taurus (Bovine).